The following is a 251-amino-acid chain: Metallo-beta-lactamase domain-containing protein 1 (251 aa).

Residues H118, H120, D122, H123, H173, D196, and H235 each coordinate Zn(2+).

It belongs to the metallo-beta-lactamase superfamily. Glyoxalase II family. In terms of assembly, homodimer. Zn(2+) serves as cofactor.

Its subcellular location is the cytoplasm. It is found in the cytosol. The protein localises to the nucleus. It carries out the reaction a ribonucleotidyl-ribonucleotide-RNA + H2O = a 3'-end ribonucleotide-RNA + a 5'-end 5'-phospho-ribonucleoside-RNA + H(+). Its function is as follows. Endoribonuclease that catalyzes the hydrolysis of histone-coding pre-mRNA 3'-end. Involved in histone pre-mRNA processing during the S-phase of the cell cycle, which is required for entering/progressing through S-phase. Cleaves histone pre-mRNA at a major and a minor cleavage site after the 5'-ACCCA-3' and the 5'-ACCCACA-3' sequence, respectively, and located downstream of the stem-loop. May require the presence of the HDE element located at the histone pre-RNA 3'-end to avoid non-specific cleavage. In Rattus norvegicus (Rat), this protein is Metallo-beta-lactamase domain-containing protein 1 (Mblac1).